The primary structure comprises 437 residues: Enolase (437 aa).

Glutamine 162 provides a ligand contact to (2R)-2-phosphoglycerate. Catalysis depends on glutamate 204, which acts as the Proton donor. Aspartate 251, glutamate 297, and aspartate 324 together coordinate Mg(2+). Residues lysine 349, arginine 378, serine 379, and lysine 400 each contribute to the (2R)-2-phosphoglycerate site. The Proton acceptor role is filled by lysine 349.

This sequence belongs to the enolase family. It depends on Mg(2+) as a cofactor.

The protein localises to the cytoplasm. The protein resides in the secreted. It localises to the cell surface. It catalyses the reaction (2R)-2-phosphoglycerate = phosphoenolpyruvate + H2O. It functions in the pathway carbohydrate degradation; glycolysis; pyruvate from D-glyceraldehyde 3-phosphate: step 4/5. In terms of biological role, catalyzes the reversible conversion of 2-phosphoglycerate (2-PG) into phosphoenolpyruvate (PEP). It is essential for the degradation of carbohydrates via glycolysis. This Chlorobium phaeobacteroides (strain DSM 266 / SMG 266 / 2430) protein is Enolase.